A 260-amino-acid chain; its full sequence is MVLIRVLANLLILQLFYAQKSSELIIGGDECNINEHRFLVALYTFRSRRLHCGGILINQEWVLSAARCNRKNIRIQLGMHSTNVINEDVQTRVPKEKFFCLSSKTHTRWNKDIMLIRLNSPVNNSTHIAPVSLPSNPPSLGSVCRVMGWGTISATKETHPDVPHCANINILDYSVCRAAYARLPATSRTLCAGILEGGKDSCKADSGGPLICNGEIQGIVSRGGHSCGQPRKPGLYTKVFDHLDWIKSIIAGNKDAICPP.

The signal sequence occupies residues 1-18 (MVLIRVLANLLILQLFYA). Positions 19-24 (QKSSEL) are excised as a propeptide. A Peptidase S1 domain is found at 25-251 (IIGGDECNIN…HLDWIKSIIA (227 aa)). 6 disulfides stabilise this stretch: C31–C165, C52–C68, C100–C258, C144–C212, C176–C191, and C202–C227. N123 and N124 each carry an N-linked (GlcNAc...) asparagine glycan.

This sequence belongs to the peptidase S1 family. Snake venom subfamily. In terms of assembly, monomer. As to expression, expressed by the venom gland.

It is found in the secreted. Functionally, snake venom serine protease that may act in the hemostasis system of the prey. The polypeptide is Snake venom serine protease 2 (TLF2) (Protobothrops flavoviridis (Habu)).